A 424-amino-acid polypeptide reads, in one-letter code: MFTCEAGIASVQQAIKDVAEGKFVIVIDAASRENEGDLILAGEKVSTEKMSFLLSHTTGIVCASLSREQAKSLDLPAMVQDNQCAFKTAFTVSVDASSGVTTGVSASDRTRTVQLLADPAATAESFVRPGHVFPLISQPGGAVQRPGHTEAAMDLMRLAGMQPCGIFAELVNPDHSMMRQQQVLAFAEQHDLTVITVDDLITYRYTYDSLVTKISSARLPTKYGDFSIHVYESIIDGTQHFALVKGDIHEQEAVPVRVHSECLTGDILGSCRCDCGAQLDMAMRYIAEEGLGVIVYLRGQEGRGIGFGHKIRAYALQDLGYDTVDANLQLGFPIDAREYGMAAQVLKDLQLTSVRLITHNPRKFFELQRLGIHVLDRIILPVSISTENEGYLRTKKERMGHWLDLPVLDDVEEEYETVERMSCR.

Positions 1 to 206 (MFTCEAGIAS…VDDLITYRYT (206 aa)) are DHBP synthase. D-ribulose 5-phosphate-binding positions include 32–33 (RE), aspartate 37, 145–149 (RPGHT), and glutamate 169. Mg(2+) is bound at residue glutamate 33. Histidine 148 contributes to the Mg(2+) binding site. The GTP cyclohydrolase II stretch occupies residues 207 to 424 (YDSLVTKISS…YETVERMSCR (218 aa)). 257–261 (RVHSE) contacts GTP. Zn(2+) contacts are provided by cysteine 262, cysteine 273, and cysteine 275. GTP-binding positions include glutamine 278, 301–303 (EGR), and threonine 323. Residue aspartate 335 is the Proton acceptor; for GTP cyclohydrolase activity of the active site. The Nucleophile; for GTP cyclohydrolase activity role is filled by arginine 337. Residues threonine 358 and lysine 363 each coordinate GTP.

It in the N-terminal section; belongs to the DHBP synthase family. This sequence in the C-terminal section; belongs to the GTP cyclohydrolase II family. The cofactor is Mg(2+). Requires Mn(2+) as cofactor. It depends on Zn(2+) as a cofactor.

It carries out the reaction D-ribulose 5-phosphate = (2S)-2-hydroxy-3-oxobutyl phosphate + formate + H(+). The enzyme catalyses GTP + 4 H2O = 2,5-diamino-6-hydroxy-4-(5-phosphoribosylamino)-pyrimidine + formate + 2 phosphate + 3 H(+). It functions in the pathway cofactor biosynthesis; riboflavin biosynthesis; 2-hydroxy-3-oxobutyl phosphate from D-ribulose 5-phosphate: step 1/1. It participates in cofactor biosynthesis; riboflavin biosynthesis; 5-amino-6-(D-ribitylamino)uracil from GTP: step 1/4. In terms of biological role, catalyzes the conversion of D-ribulose 5-phosphate to formate and 3,4-dihydroxy-2-butanone 4-phosphate. Catalyzes the conversion of GTP to 2,5-diamino-6-ribosylamino-4(3H)-pyrimidinone 5'-phosphate (DARP), formate and pyrophosphate. The chain is Riboflavin biosynthesis protein RibBA from Chlamydia trachomatis serovar D (strain ATCC VR-885 / DSM 19411 / UW-3/Cx).